An 86-amino-acid polypeptide reads, in one-letter code: RQC P-site tRNA stabilizing factor (86 aa).

The S4 RNA-binding domain maps to 1–62 (MRLDKFLKVS…QKLVTVQVNE (62 aa)).

The protein belongs to the RqcP family. As to quaternary structure, associates with stalled 50S ribosomal subunits. Binds to RqcH, 23S rRNA and the P-site tRNA. Does not require RqcH for association with 50S subunits. Crystallized 50S subunits are variously associated with an A/P-site tRNA with or without RqcH, as well as with P- and E-site tRNAs but no RqcH. Displaced from the 50S subunit by puromycin but not thiostrepton.

Its function is as follows. Key component of the ribosome quality control system (RQC), a ribosome-associated complex that mediates the extraction of incompletely synthesized nascent chains from stalled ribosomes and their subsequent degradation. RqcH recruits Ala-charged tRNA, and with RqcP directs the elongation of stalled nascent chains on 50S ribosomal subunits, leading to non-templated C-terminal alanine extensions (Ala tail). The Ala tail promotes nascent chain degradation. RqcP is associated with the translocation-like movement of the peptidyl-tRNA from the A-site into the P-site. RqcH, RqcP and charged tRNA(Ala) are necessary and sufficient to add an Ala tail to a model stalled nascent peptide; does not add Val. This Bacillus subtilis (strain 168) protein is RQC P-site tRNA stabilizing factor.